A 684-amino-acid chain; its full sequence is uncharacterized protein (684 aa).

Disordered regions lie at residues Met267–Asp353 and Ser388–Glu449. Residues Gly316–Tyr326 are compositionally biased toward polar residues. Residues Arg438 to Glu449 show a composition bias toward basic and acidic residues.

This is an uncharacterized protein from Colorado tick fever virus (strain USA/Florio N-7180) (CTFV).